We begin with the raw amino-acid sequence, 353 residues long: MTDQPIFTGAAGAIIDLTIIGGGPTGIFAAFQCGMNNISCRVIESMPQLGGQLRALYPEKHIYDVAGFPEVPAASLVDSLWQQTERYSPEVVTGETVVSFRKLENGNFEVSTDAGSVFESRALLLAAGLGAFSPRKLPQLGDISDLEGSSVFYAVKAKSDFEGKRVVIVGGGDSALDWTVGLQGVASGITLVHRMHEFQGHGKTAREVDEARDAGTVDVHLNTEVASIERRGEGIASVQLRRKNASVCTVEADRLLLLIGFKSNLGPIANWGLELVDNAVVVDAHMKTSVDGLYAAGDIASYPGKLKIIQTGLSDAAMAVRHSLTYIKPGEKIRHSFSSVKMAKAKKKEEEHA.

Positions 25, 44, 52, 57, 97, 132, 298, and 339 each coordinate FAD.

The protein belongs to the ferredoxin--NADP reductase type 2 family. In terms of assembly, homodimer. FAD is required as a cofactor.

It catalyses the reaction 2 reduced [2Fe-2S]-[ferredoxin] + NADP(+) + H(+) = 2 oxidized [2Fe-2S]-[ferredoxin] + NADPH. The sequence is that of Ferredoxin--NADP reductase from Chlorobium phaeovibrioides (strain DSM 265 / 1930) (Prosthecochloris vibrioformis (strain DSM 265)).